The primary structure comprises 255 residues: MTDTATENTTESAADYGRPAFVSRSVLVTGGNRGIGLAIAQRLAAEAHKVAVTHRGSGAPDGLFGVECDVTDNDAVDRAFTEVEEHQGPVEVLVSNAGISKDAFLIRMTEERFTEVINANLTGAFRVTQRAARSMQKKRFGRIIYIGSVSGMWGIGNQANYAAAKAGLIGMARSISRELSKAGVTANVVAPGYIDTEMTRALDERIQAGALEFIPAKRVGTAAEVPGAVSFLASEDASYIAGAVIPVDGGMGMGH.

NADP(+)-binding positions include 33-35 (RGI), arginine 55, 69-70 (DV), glycine 98, tyrosine 161, lysine 165, isoleucine 194, and arginine 205. Tyrosine 161 serves as the catalytic Proton acceptor.

The protein belongs to the short-chain dehydrogenases/reductases (SDR) family. Homotetramer.

Its subcellular location is the secreted. It localises to the cell wall. It catalyses the reaction a (3R)-hydroxyacyl-[ACP] + NADP(+) = a 3-oxoacyl-[ACP] + NADPH + H(+). It participates in lipid metabolism; mycolic acid biosynthesis. In terms of biological role, part of the mycobacterial fatty acid elongation system FAS-II, which is involved in mycolic acid biosynthesis. Catalyzes the NADPH-dependent reduction of beta-ketoacyl derivatives, the second step of the FAS-II elongation cycle. The chain is 3-oxoacyl-[acyl-carrier-protein] reductase MabA from Mycobacterium avium.